Reading from the N-terminus, the 231-residue chain is Large ribosomal subunit protein uL1 (231 aa).

This sequence belongs to the universal ribosomal protein uL1 family. In terms of assembly, part of the 50S ribosomal subunit.

Its function is as follows. Binds directly to 23S rRNA. The L1 stalk is quite mobile in the ribosome, and is involved in E site tRNA release. Protein L1 is also a translational repressor protein, it controls the translation of the L11 operon by binding to its mRNA. The protein is Large ribosomal subunit protein uL1 of Neisseria meningitidis serogroup A / serotype 4A (strain DSM 15465 / Z2491).